The primary structure comprises 568 residues: Calcium-dependent protein kinase 5 (568 aa).

Residues 125 to 379 (EIDRYKLGKG…VEQVLKHRWF (255 aa)) enclose the Protein kinase domain. Residues 131 to 139 (LGKGSYGNV) and K154 contribute to the ATP site. D245 functions as the Proton acceptor in the catalytic mechanism. Positions 400 to 408 (KFKEFHKLC) match the J domain autoinhibitory motif motif. Residues 400 to 435 (KFKEFHKLCKIKKLAVTCIAYQLNEKDIGKLKKTFE) are j domain. The J domain EF-hand interaction motif signature appears at 409-418 (KIKKLAVTCI). EF-hand domains are found at residues 425-460 (KDIG…NDNE), 462-495 (DREL…HSIF), 496-531 (QQDV…SAVQ), and 534-568 (FSKE…GVKE). 16 residues coordinate Ca(2+): D438, N440, D442, E449, D473, D475, N477, E484, D509, D511, D513, E520, D547, N549, D551, and E558.

It belongs to the protein kinase superfamily. Ser/Thr protein kinase family. CDPK subfamily. It depends on Mg(2+) as a cofactor. May be palmitoylated. In terms of processing, autophosphorylated in vitro.

The protein localises to the cytoplasm. Its subcellular location is the cytoplasmic vesicle. It localises to the secretory vesicle. It is found in the microneme membrane. The protein resides in the cell membrane. The catalysed reaction is L-seryl-[protein] + ATP = O-phospho-L-seryl-[protein] + ADP + H(+). The enzyme catalyses L-threonyl-[protein] + ATP = O-phospho-L-threonyl-[protein] + ADP + H(+). With respect to regulation, activated by calcium. Upon calcium binding to the EF-hand domains, the C-terminus of the junction domain (J domain) undergoes a conformational change which results in the dissociation of the pseudo-substrate inhibitory motif from the catalytic domain. This, in turn, may facilitate the autophosphorylation of the activation loop at Thr-285, which leads to the kinase activation. Its function is as follows. Calcium-dependent protein kinase which acts as a sensor and effector of intracellular Ca(2+) levels probably in part downstream of cGMP-activated PKG kinase. Plays a central role in host erythrocytes and hepatocytes infection cycles. During the liver stage, involved in sporozoite motility and thus in sporozoite invasion of host hepatocytes, probably together with CDPK1 and CDPK4. Involved in merosome egress from host hepatocytes, probably together with CDPK4. Required for the release of hepatic merozoites from merosomes in the host blood stream. During the asexual blood stage, required for merozoite egress from host erythrocytes by triggering microneme secretion. Phosphorylates transporter NPT1 at late schizont stage. The protein is Calcium-dependent protein kinase 5 of Plasmodium falciparum (isolate 3D7).